The chain runs to 474 residues: Mercuric reductase (474 aa).

3 residues coordinate FAD: alanine 19, glycine 39, and threonine 44. Cysteine 45 and cysteine 50 are oxidised to a cystine. Positions 54, 119, 315, and 323 each coordinate FAD. Cysteine 471 and cysteine 472 together coordinate Hg(2+).

Belongs to the class-I pyridine nucleotide-disulfide oxidoreductase family. In terms of assembly, homodimer. Requires FAD as cofactor.

The enzyme catalyses Hg + NADP(+) + H(+) = Hg(2+) + NADPH. Resistance to Hg(2+) in bacteria appears to be governed by a specialized system which includes mercuric reductase. MerA protein is responsible for volatilizing mercury as Hg(0). This Streptomyces lividans protein is Mercuric reductase (merA).